Here is a 559-residue protein sequence, read N- to C-terminus: Sulfite reductase [NADPH] hemoprotein beta-component (559 aa).

Residues Cys-423, Cys-429, Cys-468, and Cys-472 each contribute to the [4Fe-4S] cluster site. Siroheme is bound at residue Cys-472.

This sequence belongs to the nitrite and sulfite reductase 4Fe-4S domain family. As to quaternary structure, alpha(8)-beta(8). The alpha component is a flavoprotein, the beta component is a hemoprotein. It depends on siroheme as a cofactor. [4Fe-4S] cluster is required as a cofactor.

The catalysed reaction is hydrogen sulfide + 3 NADP(+) + 3 H2O = sulfite + 3 NADPH + 4 H(+). The protein operates within sulfur metabolism; hydrogen sulfide biosynthesis; hydrogen sulfide from sulfite (NADPH route): step 1/1. Component of the sulfite reductase complex that catalyzes the 6-electron reduction of sulfite to sulfide. This is one of several activities required for the biosynthesis of L-cysteine from sulfate. This chain is Sulfite reductase [NADPH] hemoprotein beta-component, found in Thiocapsa roseopersicina.